The following is a 178-amino-acid chain: ATP synthase subunit delta (178 aa).

Belongs to the ATPase delta chain family. As to quaternary structure, F-type ATPases have 2 components, F(1) - the catalytic core - and F(0) - the membrane proton channel. F(1) has five subunits: alpha(3), beta(3), gamma(1), delta(1), epsilon(1). F(0) has three main subunits: a(1), b(2) and c(10-14). The alpha and beta chains form an alternating ring which encloses part of the gamma chain. F(1) is attached to F(0) by a central stalk formed by the gamma and epsilon chains, while a peripheral stalk is formed by the delta and b chains.

It is found in the cell inner membrane. Its function is as follows. F(1)F(0) ATP synthase produces ATP from ADP in the presence of a proton or sodium gradient. F-type ATPases consist of two structural domains, F(1) containing the extramembraneous catalytic core and F(0) containing the membrane proton channel, linked together by a central stalk and a peripheral stalk. During catalysis, ATP synthesis in the catalytic domain of F(1) is coupled via a rotary mechanism of the central stalk subunits to proton translocation. This protein is part of the stalk that links CF(0) to CF(1). It either transmits conformational changes from CF(0) to CF(1) or is implicated in proton conduction. This is ATP synthase subunit delta from Azotobacter vinelandii (strain DJ / ATCC BAA-1303).